The chain runs to 640 residues: Threonine--tRNA ligase (640 aa).

The TGS domain occupies methionine 1 to threonine 61. The tract at residues aspartate 243–proline 534 is catalytic. Residues cysteine 334, histidine 385, and histidine 511 each coordinate Zn(2+).

It belongs to the class-II aminoacyl-tRNA synthetase family. In terms of assembly, homodimer. It depends on Zn(2+) as a cofactor.

It is found in the cytoplasm. It carries out the reaction tRNA(Thr) + L-threonine + ATP = L-threonyl-tRNA(Thr) + AMP + diphosphate + H(+). Catalyzes the attachment of threonine to tRNA(Thr) in a two-step reaction: L-threonine is first activated by ATP to form Thr-AMP and then transferred to the acceptor end of tRNA(Thr). Also edits incorrectly charged L-seryl-tRNA(Thr). The chain is Threonine--tRNA ligase from Dichelobacter nodosus (strain VCS1703A).